Here is a 131-residue protein sequence, read N- to C-terminus: Holo-[acyl-carrier-protein] synthase (131 aa).

The Mg(2+) site is built by Asp-8 and Glu-59.

The protein belongs to the P-Pant transferase superfamily. AcpS family. Mg(2+) is required as a cofactor.

It is found in the cytoplasm. The enzyme catalyses apo-[ACP] + CoA = holo-[ACP] + adenosine 3',5'-bisphosphate + H(+). Its function is as follows. Transfers the 4'-phosphopantetheine moiety from coenzyme A to a Ser of acyl-carrier-protein. In Rickettsia rickettsii (strain Iowa), this protein is Holo-[acyl-carrier-protein] synthase.